A 1091-amino-acid chain; its full sequence is Exonuclease/helicase subunit RexB (1091 aa).

The protein belongs to the helicase family. AddB/RexB type 2 subfamily. Heterodimer of RexA (AddA) and RexB. The cofactor is Mg(2+).

Its function is as follows. Involved in DNA double-strand break repair. Is not involved in recombination during natural competence or in plasmid establishment. Functionally, the heterodimer acts as both an ATP-dependent DNA helicase and an ATP-dependent, dual-direction single-stranded exonuclease. Recognizes the chi site generating a DNA molecule suitable for the initiation of homologous recombination. This subunit has 5' -&gt; 3' nuclease activity but not helicase activity. This chain is Exonuclease/helicase subunit RexB, found in Streptococcus pneumoniae serotype 4 (strain ATCC BAA-334 / TIGR4).